The sequence spans 329 residues: Bifunctional muramidase/DL-endopeptidase CwlT (329 aa).

An N-terminal signal peptide occupies residues 1 to 29; the sequence is MISKKVVLPLVFSAPFIFFFVLCIVVVMT. Residues 59 to 192 are muramidase; sequence RFRAVFEKYA…SYVDHVMRYV (134 aa). The NlpC/P60 domain maps to 206–329; sequence MDFYETVMKE…DHLVSFGRIK (124 aa). Cys-237 acts as the Nucleophile in catalysis. The active-site Proton acceptor is His-290. The active site involves Asn-302.

It belongs to the peptidase C40 family.

Its subcellular location is the secreted. The enzyme catalyses Hydrolysis of (1-&gt;4)-beta-linkages between N-acetylmuramic acid and N-acetyl-D-glucosamine residues in a peptidoglycan and between N-acetyl-D-glucosamine residues in chitodextrins.. Exhibits both muramidase and DL-endopeptidase activities. The N-terminal region acts as a N-acetylmuramidase, which cleaves the bond between N-acetylmuramic acid and N-acetyl-D-glucosamine (MurNAc-GlcNAc) in peptidoglycan. The C-terminal region acts as a DL-endopeptidase that cleaves the bond between D-gamma-glutamate and meso-diaminopimelic acid. Cannot degrade purified B.anthracis peptidoglycan, which differ from those of B.subtilis. CwlT is required for ICEBs1 conjugation: the muramidase activity is essential, whereas the peptidase activity is partially dispensable for transfer of ICEBs1. The chain is Bifunctional muramidase/DL-endopeptidase CwlT from Bacillus subtilis (strain 168).